Reading from the N-terminus, the 664-residue chain is Macoilin (664 aa).

Helical transmembrane passes span 28–48 (TFLY…DFVV), 75–95 (AFSV…LLFI), 120–140 (VCLP…AIRF), and 154–174 (FAAH…KSYV). The segment covering 253 to 265 (REKGKEKDKDAKK) has biased composition (basic and acidic residues). The segment at 253-274 (REKGKEKDKDAKKHNLGINNNN) is disordered. At Ser-305 the chain carries Phosphoserine. A compositionally biased stretch (polar residues) spans 320-348 (KNYKNASGVVNSSPRSHSATNGSIPSSSS). Positions 320–375 (KNYKNASGVVNSSPRSHSATNGSIPSSSSKNEKKQKCTSKSPSTHKDLMENCIPNN) are disordered. Asn-324 carries an N-linked (GlcNAc...) asparagine glycan. A Phosphoserine modification is found at Ser-332. Residues Asn-340 and Asn-452 are each glycosylated (N-linked (GlcNAc...) asparagine). The disordered stretch occupies residues 630 to 664 (TSPLSPVSPHYSSKFVETSPSGLDPNASVYQPLKK). Phosphoserine is present on residues Ser-631 and Ser-634. Asn-655 carries N-linked (GlcNAc...) asparagine glycosylation.

This sequence belongs to the macoilin family.

It is found in the rough endoplasmic reticulum membrane. The protein resides in the nucleus membrane. Functionally, plays a role in the regulation of neuronal activity. The protein is Macoilin (MACO1) of Pan troglodytes (Chimpanzee).